Consider the following 348-residue polypeptide: Phospho-2-dehydro-3-deoxyheptonate aldolase, Trp-sensitive (348 aa).

This sequence belongs to the class-I DAHP synthase family.

It catalyses the reaction D-erythrose 4-phosphate + phosphoenolpyruvate + H2O = 7-phospho-2-dehydro-3-deoxy-D-arabino-heptonate + phosphate. The protein operates within metabolic intermediate biosynthesis; chorismate biosynthesis; chorismate from D-erythrose 4-phosphate and phosphoenolpyruvate: step 1/7. Functionally, stereospecific condensation of phosphoenolpyruvate (PEP) and D-erythrose-4-phosphate (E4P) giving rise to 3-deoxy-D-arabino-heptulosonate-7-phosphate (DAHP). The chain is Phospho-2-dehydro-3-deoxyheptonate aldolase, Trp-sensitive (aroH) from Buchnera aphidicola subsp. Schizaphis graminum (strain Sg).